The sequence spans 256 residues: Ciliary microtubule associated protein 1A (256 aa).

STPGR repeat units follow at residues 66–92 (PGPGYLVPSNITVKGKDGTPAYSIYGR), 181–206 (PGPGTYRVIDPGSYKHRPPQYSMTAR), and 217–242 (PGPGAYSPEKVVMSRPQAPNFSFGIR).

The protein belongs to the CIMAP family.

It is found in the cytoplasm. The protein resides in the cytoskeleton. Its subcellular location is the flagellum axoneme. Functionally, outer dense fibers are filamentous structures located on the outside of the axoneme in the midpiece and principal piece of the mammalian sperm tail. May help to maintain the passive elastic structures and elastic recoil of the sperm tail. This Xenopus tropicalis (Western clawed frog) protein is Ciliary microtubule associated protein 1A (cimap1a).